The sequence spans 497 residues: Glycerol kinase (497 aa).

An ADP-binding site is contributed by Thr11. ATP is bound by residues Thr11, Thr12, and Ser13. Thr11 lines the sn-glycerol 3-phosphate pocket. Arg15 contributes to the ADP binding site. Sn-glycerol 3-phosphate contacts are provided by Arg81, Glu82, Tyr134, and Asp244. Arg81, Glu82, Tyr134, Asp244, and Gln245 together coordinate glycerol. Residues Thr266 and Gly309 each coordinate ADP. Residues Thr266, Gly309, Gln313, and Gly410 each contribute to the ATP site. Residues Gly410 and Asn414 each contribute to the ADP site.

This sequence belongs to the FGGY kinase family.

The catalysed reaction is glycerol + ATP = sn-glycerol 3-phosphate + ADP + H(+). Its pathway is polyol metabolism; glycerol degradation via glycerol kinase pathway; sn-glycerol 3-phosphate from glycerol: step 1/1. Its activity is regulated as follows. Inhibited by fructose 1,6-bisphosphate (FBP). Its function is as follows. Key enzyme in the regulation of glycerol uptake and metabolism. Catalyzes the phosphorylation of glycerol to yield sn-glycerol 3-phosphate. The polypeptide is Glycerol kinase (Fusobacterium nucleatum subsp. nucleatum (strain ATCC 25586 / DSM 15643 / BCRC 10681 / CIP 101130 / JCM 8532 / KCTC 2640 / LMG 13131 / VPI 4355)).